Here is a 182-residue protein sequence, read N- to C-terminus: Adenine phosphoribosyltransferase (182 aa).

Belongs to the purine/pyrimidine phosphoribosyltransferase family. As to quaternary structure, homodimer.

The protein localises to the cytoplasm. The catalysed reaction is AMP + diphosphate = 5-phospho-alpha-D-ribose 1-diphosphate + adenine. Its pathway is purine metabolism; AMP biosynthesis via salvage pathway; AMP from adenine: step 1/1. In terms of biological role, catalyzes a salvage reaction resulting in the formation of AMP, that is energically less costly than de novo synthesis. In Pseudomonas syringae pv. syringae (strain B728a), this protein is Adenine phosphoribosyltransferase.